Here is a 406-residue protein sequence, read N- to C-terminus: Tryptophan synthase beta chain (406 aa).

Residue Lys-99 is modified to N6-(pyridoxal phosphate)lysine.

This sequence belongs to the TrpB family. As to quaternary structure, tetramer of two alpha and two beta chains. Requires pyridoxal 5'-phosphate as cofactor.

It carries out the reaction (1S,2R)-1-C-(indol-3-yl)glycerol 3-phosphate + L-serine = D-glyceraldehyde 3-phosphate + L-tryptophan + H2O. It functions in the pathway amino-acid biosynthesis; L-tryptophan biosynthesis; L-tryptophan from chorismate: step 5/5. The beta subunit is responsible for the synthesis of L-tryptophan from indole and L-serine. The chain is Tryptophan synthase beta chain from Rhizobium etli (strain CIAT 652).